A 258-amino-acid polypeptide reads, in one-letter code: NAD kinase (258 aa).

Catalysis depends on D51, which acts as the Proton acceptor. NAD(+) is bound by residues D51–G52, K56, N119–D120, K130, D149, T160–S165, and A184.

It belongs to the NAD kinase family. A divalent metal cation serves as cofactor.

Its subcellular location is the cytoplasm. The enzyme catalyses NAD(+) + ATP = ADP + NADP(+) + H(+). Functionally, involved in the regulation of the intracellular balance of NAD and NADP, and is a key enzyme in the biosynthesis of NADP. Catalyzes specifically the phosphorylation on 2'-hydroxyl of the adenosine moiety of NAD to yield NADP. The protein is NAD kinase of Thermotoga sp. (strain RQ2).